A 367-amino-acid polypeptide reads, in one-letter code: Peptide chain release factor 1 (367 aa).

Residue glutamine 238 is modified to N5-methylglutamine.

Belongs to the prokaryotic/mitochondrial release factor family. In terms of processing, methylated by PrmC. Methylation increases the termination efficiency of RF1.

It is found in the cytoplasm. Peptide chain release factor 1 directs the termination of translation in response to the peptide chain termination codons UAG and UAA. In Dictyoglomus turgidum (strain DSM 6724 / Z-1310), this protein is Peptide chain release factor 1.